The chain runs to 127 residues: Protein ApaG (127 aa).

The 126-residue stretch at 2–127 folds into the ApaG domain; it reads SELVEHIQVH…FRLAGPNQVH (126 aa).

The chain is Protein ApaG from Chromohalobacter salexigens (strain ATCC BAA-138 / DSM 3043 / CIP 106854 / NCIMB 13768 / 1H11).